The chain runs to 299 residues: Prohibitin-2 (299 aa).

An N-acetylalanine modification is found at alanine 2. The interval 19–49 is necessary for transcriptional repression; sequence MGTALKLLLGAGAVAYGVRESVFTVEGGHRA. At tyrosine 128 the chain carries Phosphotyrosine. At lysine 147 the chain carries N6-acetyllysine. Residues 150–174 are necessary for transcriptional repression; the sequence is ASQLITQRAQVSLLIRRELTERAKD. Phosphoserine is present on serine 151. A coiled-coil region spans residues 190–238; the sequence is SREYTAAVEAKQVAQQEAQRAQFLVEKAKQEQRQKIVQAEGEAEAAKML. Lysine 200, lysine 236, lysine 250, and lysine 262 each carry N6-acetyllysine.

The protein belongs to the prohibitin family. In terms of assembly, the mitochondrial prohibitin complex consists of two subunits (PHB1 and PHB2), assembled into a membrane-associated ring-shaped supercomplex of approximately 1 mDa. Interacts with ESR1, HDAC1 and HDAC5. Interacts with ZNF703. Interacts with STOML2. Interacts with ARFGEF3. Interacts with SPHK2. Interacts with COX4I1; the interaction associates PHB2 with COX. Interacts with MAP1LC3B (membrane-bound form LC3-II); the interaction is direct and upon mitochondrial depolarization and proteasome-dependent outer membrane rupture. Interacts with IGFBP6 (via C-terminal domain). Interacts with CLPB. Interacts with CD86 (via cytoplasmic domain); the interactions increases after priming with CD40. Interacts with AFG3L2. Interacts with DNAJC19. Interacts with AKT2; this interaction may be important for myogenic differentiation. Post-translationally, phosphorylated. Tyrosine phosphorylation is indirectly stimulated by IGFBP6. In terms of tissue distribution, widely expressed in different tissues.

It is found in the mitochondrion inner membrane. It localises to the cytoplasm. The protein resides in the nucleus. Its subcellular location is the cell membrane. Its function is as follows. Protein with pleiotropic attributes mediated in a cell-compartment- and tissue-specific manner, which include the plasma membrane-associated cell signaling functions, mitochondrial chaperone, and transcriptional co-regulator of transcription factors and sex steroid hormones in the nucleus. In terms of biological role, in the mitochondria, together with PHB, forms large ring complexes (prohibitin complexes) in the inner mitochondrial membrane (IMM) and functions as a chaperone protein that stabilizes mitochondrial respiratory enzymes and maintains mitochondrial integrity in the IMM, which is required for mitochondrial morphogenesis, neuronal survival, and normal lifespan. The prohibitin complex, with DNAJC19, regulates cardiolipin remodeling and the protein turnover of OMA1 in a cardiolipin-binding manner. Also regulates cytochrome-c oxidase assembly (COX) and mitochondrial respiration. Binding to sphingoid 1-phosphate (SPP) modulates its regulator activity. Has a key role of mitophagy receptor involved in targeting mitochondria for autophagic degradation. Involved in mitochondrial-mediated antiviral innate immunity, activates RIG-I-mediated signal transduction and production of IFNB1 and pro-inflammatory cytokine IL6. In the nucleus, serves as transcriptional co-regulator. Acts as a mediator of transcriptional repression by nuclear hormone receptors via recruitment of histone deacetylases. Functions as an estrogen receptor (ER)-selective coregulator that potentiates the inhibitory activities of antiestrogens and represses the activity of estrogens. Competes with NCOA1 for modulation of ER transcriptional activity. Functionally, in the plasma membrane, is involved in IGFBP6-induced cell migration. Cooperates with CD86 to mediate CD86-signaling in B lymphocytes that regulates the level of IgG1 produced through the activation of distal signaling intermediates. Upon CD40 engagement, required to activate NF-kappa-B signaling pathway via phospholipase C and protein kinase C activation. The protein is Prohibitin-2 of Mus musculus (Mouse).